The chain runs to 153 residues: Deoxyuridine 5'-triphosphate nucleotidohydrolase (153 aa).

Substrate-binding positions include 71–73 (RSG), N84, 88–90 (LID), and M98.

Belongs to the dUTPase family. Mg(2+) serves as cofactor.

The enzyme catalyses dUTP + H2O = dUMP + diphosphate + H(+). It functions in the pathway pyrimidine metabolism; dUMP biosynthesis; dUMP from dCTP (dUTP route): step 2/2. This enzyme is involved in nucleotide metabolism: it produces dUMP, the immediate precursor of thymidine nucleotides and it decreases the intracellular concentration of dUTP so that uracil cannot be incorporated into DNA. This is Deoxyuridine 5'-triphosphate nucleotidohydrolase from Wigglesworthia glossinidia brevipalpis.